The chain runs to 494 residues: Membrane-bound lytic murein transglycosylase F (494 aa).

An N-terminal signal peptide occupies residues 1-20; sequence MIKYLYVILLGLLLSGCQPA. The interval 21 to 259 is non-LT domain; that stretch reads EVVEIEASPK…HLNEKYFGHV (239 aa). The segment at 260 to 494 is LT domain; that stretch reads KRFDYVDTRA…LKPKLGAGQP (235 aa). The active site involves glutamate 304. Residues 473-485 show a composition bias toward polar residues; sequence QSLASDSKTNNTL. Positions 473–494 are disordered; it reads QSLASDSKTNNTLKPKLGAGQP.

The protein in the N-terminal section; belongs to the bacterial solute-binding protein 3 family. In the C-terminal section; belongs to the transglycosylase Slt family.

It localises to the cell outer membrane. The catalysed reaction is Exolytic cleavage of the (1-&gt;4)-beta-glycosidic linkage between N-acetylmuramic acid (MurNAc) and N-acetylglucosamine (GlcNAc) residues in peptidoglycan, from either the reducing or the non-reducing ends of the peptidoglycan chains, with concomitant formation of a 1,6-anhydrobond in the MurNAc residue.. Functionally, murein-degrading enzyme that degrades murein glycan strands and insoluble, high-molecular weight murein sacculi, with the concomitant formation of a 1,6-anhydromuramoyl product. Lytic transglycosylases (LTs) play an integral role in the metabolism of the peptidoglycan (PG) sacculus. Their lytic action creates space within the PG sacculus to allow for its expansion as well as for the insertion of various structures such as secretion systems and flagella. The protein is Membrane-bound lytic murein transglycosylase F of Shewanella denitrificans (strain OS217 / ATCC BAA-1090 / DSM 15013).